The following is a 245-amino-acid chain: 3-dehydroquinate dehydratase (245 aa).

Residues Glu-35–Arg-37 and Arg-70 contribute to the 3-dehydroquinate site. The Proton donor/acceptor role is filled by His-132. The active-site Schiff-base intermediate with substrate is the Lys-158. 3-dehydroquinate contacts are provided by Arg-199, Thr-220, and Gln-224.

It belongs to the type-I 3-dehydroquinase family. Homodimer.

It carries out the reaction 3-dehydroquinate = 3-dehydroshikimate + H2O. It participates in metabolic intermediate biosynthesis; chorismate biosynthesis; chorismate from D-erythrose 4-phosphate and phosphoenolpyruvate: step 3/7. Its function is as follows. Involved in the third step of the chorismate pathway, which leads to the biosynthesis of aromatic amino acids. Catalyzes the cis-dehydration of 3-dehydroquinate (DHQ) and introduces the first double bond of the aromatic ring to yield 3-dehydroshikimate. This chain is 3-dehydroquinate dehydratase, found in Haloquadratum walsbyi (strain DSM 16790 / HBSQ001).